The chain runs to 391 residues: Pyruvate dehydrogenase E1 component subunit alpha, mitochondrial (391 aa).

Residues 1–26 constitute a mitochondrion transit peptide; that stretch reads MALSTSRAINHIMKPLSAAVCATRRL. The pyruvate site is built by His-92, Tyr-118, Arg-119, Gly-167, Val-169, Asp-198, Gly-199, Ala-200, Asn-227, and Tyr-229. 8 residues coordinate thiamine diphosphate: Tyr-118, Arg-119, Gly-167, Val-169, Asp-198, Gly-199, Ala-200, and Asn-227. Asp-198 is a binding site for Mg(2+). Asn-227 and Tyr-229 together coordinate Mg(2+). His-293 provides a ligand contact to thiamine diphosphate. The interval 294–313 is disordered; sequence SMSDPGSTYRTRDEISGVRQ. The segment covering 303 to 313 has biased composition (basic and acidic residues); the sequence is RTRDEISGVRQ.

As to quaternary structure, tetramer of 2 alpha and 2 beta subunits. The cofactor is thiamine diphosphate. Mg(2+) is required as a cofactor.

Its subcellular location is the mitochondrion matrix. It catalyses the reaction N(6)-[(R)-lipoyl]-L-lysyl-[protein] + pyruvate + H(+) = N(6)-[(R)-S(8)-acetyldihydrolipoyl]-L-lysyl-[protein] + CO2. E1 activity is regulated by phosphorylation (inactivation) and dephosphorylation (activation) of the alpha subunit. The pyruvate dehydrogenase complex catalyzes the overall conversion of pyruvate to acetyl-CoA and CO(2). It contains multiple copies of three enzymatic components: pyruvate dehydrogenase (E1), dihydrolipoamide acetyltransferase (E2) and lipoamide dehydrogenase (E3). The polypeptide is Pyruvate dehydrogenase E1 component subunit alpha, mitochondrial (Solanum tuberosum (Potato)).